Here is a 251-residue protein sequence, read N- to C-terminus: Flap endonuclease Xni (251 aa).

D104 serves as a coordination point for Mg(2+). Positions 160–249 (VLPRQLPDYW…IDGNLQQLRL (90 aa)) constitute a 5'-3' exonuclease domain. Positions 171, 172, 180, 182, and 185 each coordinate K(+). Residues 184–189 (GIGPKS) form an interaction with DNA region.

Belongs to the Xni family. Mg(2+) is required as a cofactor. Requires K(+) as cofactor.

Functionally, has flap endonuclease activity. During DNA replication, flap endonucleases cleave the 5'-overhanging flap structure that is generated by displacement synthesis when DNA polymerase encounters the 5'-end of a downstream Okazaki fragment. In Salmonella choleraesuis (strain SC-B67), this protein is Flap endonuclease Xni.